Reading from the N-terminus, the 753-residue chain is 5-methyltetrahydropteroyltriglutamate--homocysteine methyltransferase (753 aa).

5-methyltetrahydropteroyltri-L-glutamate is bound by residues 17-20 (RELK) and K117. Residues 431–433 (IGS) and E484 contribute to the L-homocysteine site. Residues 431–433 (IGS) and E484 contribute to the L-methionine site. 5-methyltetrahydropteroyltri-L-glutamate contacts are provided by residues 515–516 (RC) and W561. An L-homocysteine-binding site is contributed by D599. Residue D599 coordinates L-methionine. E605 provides a ligand contact to 5-methyltetrahydropteroyltri-L-glutamate. Zn(2+) is bound by residues H641, C643, and E665. The active-site Proton donor is the H694. Zn(2+) is bound at residue C726.

Belongs to the vitamin-B12 independent methionine synthase family. Zn(2+) serves as cofactor.

The catalysed reaction is 5-methyltetrahydropteroyltri-L-glutamate + L-homocysteine = tetrahydropteroyltri-L-glutamate + L-methionine. Its pathway is amino-acid biosynthesis; L-methionine biosynthesis via de novo pathway; L-methionine from L-homocysteine (MetE route): step 1/1. Its function is as follows. Catalyzes the transfer of a methyl group from 5-methyltetrahydrofolate to homocysteine resulting in methionine formation. In Enterobacter sp. (strain 638), this protein is 5-methyltetrahydropteroyltriglutamate--homocysteine methyltransferase.